The chain runs to 517 residues: Aldehyde dehydrogenase, mitochondrial (517 aa).

The N-terminal 17 residues, 1–17 (MLRAAARFGPRLGRRLL), are a transit peptide targeting the mitochondrion. The short motif at 9-24 (GPRLGRRLLSAAATQA) is the SIFI-degron element. N6-acetyllysine is present on residues Lys-52, Lys-73, Lys-78, and Lys-159. 262 to 267 (GSTEIG) is an NAD(+) binding site. Glu-285 acts as the Proton acceptor in catalysis. Catalysis depends on Cys-319, which acts as the Nucleophile. Residues Lys-368, Lys-383, Lys-426, Lys-428, and Lys-451 each carry the N6-acetyllysine modification.

It belongs to the aldehyde dehydrogenase family. Homotetramer. In terms of processing, in response to mitochondrial stress, the precursor protein is ubiquitinated by the SIFI complex in the cytoplasm before mitochondrial import, leading to its degradation. Within the SIFI complex, UBR4 initiates ubiquitin chain that are further elongated or branched by KCMF1.

Its subcellular location is the mitochondrion matrix. It carries out the reaction an aldehyde + NAD(+) + H2O = a carboxylate + NADH + 2 H(+). It participates in alcohol metabolism; ethanol degradation; acetate from ethanol: step 2/2. Its function is as follows. Required for clearance of cellular formaldehyde, a cytotoxic and carcinogenic metabolite that induces DNA damage. This is Aldehyde dehydrogenase, mitochondrial (ALDH2) from Homo sapiens (Human).